The primary structure comprises 185 residues: Gastrokine-1 (185 aa).

The signal sequence occupies residues 1 to 20 (MKFTIVFAGLLGVFLAPALA). Positions 54–150 (NNGWDSWNSI…MCRGIPTYMA (97 aa)) constitute a BRICHOS domain. A disulfide bridge connects residues C81 and C142.

The protein belongs to the gastrokine family. Expressed in stomach (at protein level). No expression is detected in cancer tissue or gastric cancer cell lines.

The protein localises to the secreted. It localises to the cytoplasmic granule. The protein resides in the golgi apparatus. Functionally, has mitogenic activity and may be involved in maintaining the integrity of the gastric mucosal epithelium. This Homo sapiens (Human) protein is Gastrokine-1 (GKN1).